The sequence spans 1054 residues: Carbamoyl phosphate synthase large chain (1054 aa).

The segment at 1–402 (MPRRDDIRSI…SLLKAMASLE (402 aa)) is carboxyphosphate synthetic domain. The ATP site is built by Arg129, Arg169, Gly175, Gly176, Arg208, Val210, Glu215, Gly241, Val242, His243, Gln285, and Glu299. Positions 133-328 (REAMERIGLR…IAKIAARLAV (196 aa)) constitute an ATP-grasp 1 domain. Mg(2+) contacts are provided by Gln285, Glu299, and Asn301. Mn(2+) contacts are provided by Gln285, Glu299, and Asn301. The segment at 403 to 531 (IETRDIQARL…YYYSTYEQED (129 aa)) is oligomerization domain. The interval 532–914 (EVERGENPSV…AFAKALAAAG (383 aa)) is carbamoyl phosphate synthetic domain. An ATP-grasp 2 domain is found at 658–849 (GRLLRELGIP…LARLATRVLL (192 aa)). Residues Arg694, Lys733, Glu740, Gly765, Val766, His767, Ser768, Gln808, and Glu820 each coordinate ATP. Mg(2+) is bound by residues Gln808, Glu820, and Asn822. Positions 808, 820, and 822 each coordinate Mn(2+). One can recognise an MGS-like domain in the interval 915-1054 (QRLPESGRVY…SLQDLYAART (140 aa)). The tract at residues 915–1054 (QRLPESGRVY…SLQDLYAART (140 aa)) is allosteric domain.

Belongs to the CarB family. Composed of two chains; the small (or glutamine) chain promotes the hydrolysis of glutamine to ammonia, which is used by the large (or ammonia) chain to synthesize carbamoyl phosphate. Tetramer of heterodimers (alpha,beta)4. The cofactor is Mg(2+). Mn(2+) is required as a cofactor.

It catalyses the reaction hydrogencarbonate + L-glutamine + 2 ATP + H2O = carbamoyl phosphate + L-glutamate + 2 ADP + phosphate + 2 H(+). The catalysed reaction is hydrogencarbonate + NH4(+) + 2 ATP = carbamoyl phosphate + 2 ADP + phosphate + 2 H(+). It participates in amino-acid biosynthesis; L-arginine biosynthesis; carbamoyl phosphate from bicarbonate: step 1/1. It functions in the pathway pyrimidine metabolism; UMP biosynthesis via de novo pathway; (S)-dihydroorotate from bicarbonate: step 1/3. Large subunit of the glutamine-dependent carbamoyl phosphate synthetase (CPSase). CPSase catalyzes the formation of carbamoyl phosphate from the ammonia moiety of glutamine, carbonate, and phosphate donated by ATP, constituting the first step of 2 biosynthetic pathways, one leading to arginine and/or urea and the other to pyrimidine nucleotides. The large subunit (synthetase) binds the substrates ammonia (free or transferred from glutamine from the small subunit), hydrogencarbonate and ATP and carries out an ATP-coupled ligase reaction, activating hydrogencarbonate by forming carboxy phosphate which reacts with ammonia to form carbamoyl phosphate. The polypeptide is Carbamoyl phosphate synthase large chain (Rubrobacter xylanophilus (strain DSM 9941 / JCM 11954 / NBRC 16129 / PRD-1)).